The chain runs to 477 residues: Ribulose bisphosphate carboxylase large chain (477 aa).

Positions 1 to 2 (MS) are excised as a propeptide. Pro3 is modified (N-acetylproline). Lys14 is modified (N6,N6,N6-trimethyllysine). Asn123 and Thr173 together coordinate substrate. Lys175 acts as the Proton acceptor in catalysis. Lys177 serves as a coordination point for substrate. Positions 201, 203, and 204 each coordinate Mg(2+). Lys201 is modified (N6-carboxylysine). His294 acts as the Proton acceptor in catalysis. Substrate is bound by residues Arg295, His327, and Ser379.

This sequence belongs to the RuBisCO large chain family. Type I subfamily. As to quaternary structure, heterohexadecamer of 8 large chains and 8 small chains; disulfide-linked. The disulfide link is formed within the large subunit homodimers. The cofactor is Mg(2+). In terms of processing, the disulfide bond which can form in the large chain dimeric partners within the hexadecamer appears to be associated with oxidative stress and protein turnover.

It is found in the plastid. The protein localises to the chloroplast. The catalysed reaction is 2 (2R)-3-phosphoglycerate + 2 H(+) = D-ribulose 1,5-bisphosphate + CO2 + H2O. It catalyses the reaction D-ribulose 1,5-bisphosphate + O2 = 2-phosphoglycolate + (2R)-3-phosphoglycerate + 2 H(+). In terms of biological role, ruBisCO catalyzes two reactions: the carboxylation of D-ribulose 1,5-bisphosphate, the primary event in carbon dioxide fixation, as well as the oxidative fragmentation of the pentose substrate in the photorespiration process. Both reactions occur simultaneously and in competition at the same active site. This chain is Ribulose bisphosphate carboxylase large chain, found in Solanum bulbocastanum (Wild potato).